Consider the following 154-residue polypeptide: NADPH-dependent 7-cyano-7-deazaguanine reductase (154 aa).

Positions 1–21 are enriched in polar residues; the sequence is MPNTDVSSLSMLGQQTETAQS. Residues 1–28 are disordered; the sequence is MPNTDVSSLSMLGQQTETAQSPEEAVLE. The active-site Thioimide intermediate is the cysteine 52. Aspartate 59 acts as the Proton donor in catalysis. Substrate-binding positions include 74 to 76 and 93 to 94; these read VES and HE.

It belongs to the GTP cyclohydrolase I family. QueF type 1 subfamily.

The protein resides in the cytoplasm. It carries out the reaction 7-aminomethyl-7-carbaguanine + 2 NADP(+) = 7-cyano-7-deazaguanine + 2 NADPH + 3 H(+). It functions in the pathway tRNA modification; tRNA-queuosine biosynthesis. Catalyzes the NADPH-dependent reduction of 7-cyano-7-deazaguanine (preQ0) to 7-aminomethyl-7-deazaguanine (preQ1). The polypeptide is NADPH-dependent 7-cyano-7-deazaguanine reductase (Rhizobium johnstonii (strain DSM 114642 / LMG 32736 / 3841) (Rhizobium leguminosarum bv. viciae)).